We begin with the raw amino-acid sequence, 164 residues long: MANKLFLVCATLALCFLLTNASIYRTVVEFEEDDASNPVGPRQRCQKEFQQSQHLRACQRWMSKQMRQGRGGGPSLDDEFDFEGPQQGYQLLQQCCNELRQEEPVCVCPTLKQAARAVSLQGQHGPFQSRKIYQSAKYLPNICKIQQVGECPFQTTIPFFPPYY.

The N-terminal stretch at Met-1 to Ala-21 is a signal peptide. 2 consecutive propeptides follow at residues Ser-22–Asn-37 and Gly-73–Asp-81.

It belongs to the 2S seed storage albumins family. The mature protein consists of a small and a large chain linked by disulfide bonds. Interacts with AHK2.

Functionally, this is a 2S seed storage protein. The sequence is that of 2S seed storage protein 3 (AT2S3) from Arabidopsis thaliana (Mouse-ear cress).